The chain runs to 451 residues: MSSSSESHLATAKTALTAVASVAAAAILARSVVQDYMPNEVHEYISHGFRRFFSYFSYQMTAVIEEFGGFEHNQVFEAAEAYLSTKISNSTRRIKVNKLEKQSNYSVTVERDEEVVDIFDGVKLSWILVCRHVDKKDFRNPRDLNSTLKSEVRSYELSFRKKFKNMVLESYLPFVVEQAASIKQKFKTLKIFTVDSYSVEWTSVTLDHPSTFRTLALDPEVKKNLVEDLDRFVQRKGFYGRVGKAWKRGYLLYGPPGTGKSSLIAAIANHLNFDIYDLDLTSLNNNAELRRLLMSTANRSILVVEDIDCSIELKDRSTDQENNDPLHKTVTLSGLLNFVDGLWSSCGNERIIVFTTNYREKLDPALLRPGRMDMHIHMSYCTPAAFKVLASNYLEIQDHILFEQIEEFIREIEVTPAEVAEQLMRSDSVDKVLQGLVEFLKAKKQIDNSKA.

An N-terminal signal peptide occupies residues Met1–Ala25. Gly254 to Ser261 is a binding site for ATP.

This sequence belongs to the AAA ATPase family. BCS1 subfamily. Mg(2+) is required as a cofactor.

It catalyses the reaction ATP + H2O = ADP + phosphate + H(+). This is AAA-ATPase At3g50940 from Arabidopsis thaliana (Mouse-ear cress).